Reading from the N-terminus, the 291-residue chain is Elongation factor Ts (291 aa).

The interval 80–83 (TDFV) is involved in Mg(2+) ion dislocation from EF-Tu.

The protein belongs to the EF-Ts family.

It is found in the cytoplasm. Its function is as follows. Associates with the EF-Tu.GDP complex and induces the exchange of GDP to GTP. It remains bound to the aminoacyl-tRNA.EF-Tu.GTP complex up to the GTP hydrolysis stage on the ribosome. The protein is Elongation factor Ts of Acinetobacter baylyi (strain ATCC 33305 / BD413 / ADP1).